A 453-amino-acid chain; its full sequence is Chromosomal replication initiator protein DnaA (453 aa).

The tract at residues 1–76 (MSGDAAALWP…LAWRQQLPAV (76 aa)) is domain I, interacts with DnaA modulators. The tract at residues 76–115 (VRSVSVRGGVAATERAATLASVPLPTFDAPAAPAANPALL) is domain II. The tract at residues 116 to 333 (GFDPRLSFDR…GALNKLLAYA (218 aa)) is domain III, AAA+ region. Glycine 160, glycine 162, lysine 163, and threonine 164 together coordinate ATP. Residues 334-453 (ALTGARIDLM…IAAIRRSLNS (120 aa)) form a domain IV, binds dsDNA region.

This sequence belongs to the DnaA family. As to quaternary structure, oligomerizes as a right-handed, spiral filament on DNA at oriC.

Its subcellular location is the cytoplasm. Plays an essential role in the initiation and regulation of chromosomal replication. ATP-DnaA binds to the origin of replication (oriC) to initiate formation of the DNA replication initiation complex once per cell cycle. Binds the DnaA box (a 9 base pair repeat at the origin) and separates the double-stranded (ds)DNA. Forms a right-handed helical filament on oriC DNA; dsDNA binds to the exterior of the filament while single-stranded (ss)DNA is stabiized in the filament's interior. The ATP-DnaA-oriC complex binds and stabilizes one strand of the AT-rich DNA unwinding element (DUE), permitting loading of DNA polymerase. After initiation quickly degrades to an ADP-DnaA complex that is not apt for DNA replication. Binds acidic phospholipids. This is Chromosomal replication initiator protein DnaA from Sphingopyxis alaskensis (strain DSM 13593 / LMG 18877 / RB2256) (Sphingomonas alaskensis).